Consider the following 183-residue polypeptide: uncharacterized protein (183 aa).

Residues 1–182 (MFRVVHGDIT…VALKVLERDE (182 aa)) enclose the Macro domain.

This is an uncharacterized protein from Pyrococcus abyssi (strain GE5 / Orsay).